We begin with the raw amino-acid sequence, 346 residues long: Dihydroorotase (346 aa).

Positions 14 and 16 each coordinate Zn(2+). Substrate is bound by residues 16 to 18 (HLR) and asparagine 42. Lysine 100, histidine 137, and histidine 175 together coordinate Zn(2+). Lysine 100 is subject to N6-carboxylysine. Histidine 137 provides a ligand contact to substrate. Residue leucine 220 coordinates substrate. Aspartate 248 serves as a coordination point for Zn(2+). Residue aspartate 248 is part of the active site. The substrate site is built by histidine 252 and alanine 264.

This sequence belongs to the metallo-dependent hydrolases superfamily. DHOase family. Class II DHOase subfamily. As to quaternary structure, homodimer. Zn(2+) is required as a cofactor.

The catalysed reaction is (S)-dihydroorotate + H2O = N-carbamoyl-L-aspartate + H(+). It participates in pyrimidine metabolism; UMP biosynthesis via de novo pathway; (S)-dihydroorotate from bicarbonate: step 3/3. In terms of biological role, catalyzes the reversible cyclization of carbamoyl aspartate to dihydroorotate. This is Dihydroorotase from Cereibacter sphaeroides (strain ATCC 17025 / ATH 2.4.3) (Rhodobacter sphaeroides).